The primary structure comprises 327 residues: Phenylalanine--tRNA ligase alpha subunit (327 aa).

E252 is a binding site for Mg(2+).

It belongs to the class-II aminoacyl-tRNA synthetase family. Phe-tRNA synthetase alpha subunit type 1 subfamily. As to quaternary structure, tetramer of two alpha and two beta subunits. The cofactor is Mg(2+).

It localises to the cytoplasm. It catalyses the reaction tRNA(Phe) + L-phenylalanine + ATP = L-phenylalanyl-tRNA(Phe) + AMP + diphosphate + H(+). This Shewanella oneidensis (strain ATCC 700550 / JCM 31522 / CIP 106686 / LMG 19005 / NCIMB 14063 / MR-1) protein is Phenylalanine--tRNA ligase alpha subunit.